The sequence spans 565 residues: Oxygen-dependent choline dehydrogenase (565 aa).

7–36 (DYIICGAGSAGNVLATRLTEDPGVTVLLLE) is a binding site for FAD. His474 functions as the Proton acceptor in the catalytic mechanism.

The protein belongs to the GMC oxidoreductase family. Requires FAD as cofactor.

It carries out the reaction choline + A = betaine aldehyde + AH2. It catalyses the reaction betaine aldehyde + NAD(+) + H2O = glycine betaine + NADH + 2 H(+). It functions in the pathway amine and polyamine biosynthesis; betaine biosynthesis via choline pathway; betaine aldehyde from choline (cytochrome c reductase route): step 1/1. Functionally, involved in the biosynthesis of the osmoprotectant glycine betaine. Catalyzes the oxidation of choline to betaine aldehyde and betaine aldehyde to glycine betaine at the same rate. The chain is Oxygen-dependent choline dehydrogenase from Burkholderia mallei (strain ATCC 23344).